The sequence spans 218 residues: Mitochondrial fission factor (218 aa).

Over 1-198 (MAEISRIQYE…ENKERAKREM (198 aa)) the chain is Cytoplasmic. A Phosphothreonine modification is found at T89. S129, S131, S146, and S171 each carry phosphoserine. Residues 167–198 (VDAASLRRQIIKLNRRLQLLEEENKERAKREM) are a coiled coil. A helical; Anchor for type IV membrane protein membrane pass occupies residues 199–216 (VMYSITVAFWLLNSWLWF). At 217-218 (RR) the chain is on the mitochondrial intermembrane side.

The protein belongs to the Tango11 family. In terms of assembly, homodimer. Interacts with DNM1L. Interacts with C11orf65/MFI; the interaction inhibits MFF interaction with DNM1L.

It is found in the mitochondrion outer membrane. It localises to the peroxisome. The protein localises to the cytoplasmic vesicle. Its subcellular location is the secretory vesicle. The protein resides in the synaptic vesicle. Plays a role in mitochondrial and peroxisomal fission. Promotes the recruitment and association of the fission mediator dynamin-related protein 1 (DNM1L) to the mitochondrial surface. May be involved in regulation of synaptic vesicle membrane dynamics by recruitment of DNM1L to clathrin-containing vesicles. In Rattus norvegicus (Rat), this protein is Mitochondrial fission factor (Mff).